Here is a 464-residue protein sequence, read N- to C-terminus: Glycine receptor subunit alpha-3 (464 aa).

Positions 1 to 33 are cleaved as a signal peptide; that stretch reads MAHVRHFRTLVSGFYFWEAALLLSLVATKETNS. The Extracellular segment spans residues 34–255; it reads ARSRSAPMSP…RFHLERQMGY (222 aa). N-linked (GlcNAc...) asparagine glycosylation is present at N71. C171 and C185 are joined by a disulfide. Positions 225 and 227 each coordinate Zn(2+). C231 and C242 are joined by a disulfide. Strychnine is bound at residue 235 to 240; it reads YNTGKF. A Zn(2+)-binding site is contributed by H248. Residues 256–277 form a helical membrane-spanning segment; sequence YLIQMYIPSLLIVILSWVSFWI. Topologically, residues 278–282 are cytoplasmic; that stretch reads NMDAA. A helical membrane pass occupies residues 283–303; it reads PARVALGITTVLTMTTQSSGS. At 304–314 the chain is on the extracellular side; the sequence is RASLPKVSYVK. A helical membrane pass occupies residues 315 to 335; the sequence is AIDIWMAVCLLFVFSALLEYA. Over 336-430 the chain is Cytoplasmic; sequence AVNFVSRQHK…FIDRAKKIDT (95 aa). S370 carries the phosphoserine modification. S379 is subject to Phosphoserine; by PKA. A helical membrane pass occupies residues 431–451; the sequence is ISRACFPLAFLIFNIFYWVIY. Residues 452–464 are Extracellular-facing; that stretch reads KILRHEDIHQQQD.

It belongs to the ligand-gated ion channel (TC 1.A.9) family. Glycine receptor (TC 1.A.9.3) subfamily. GLRA3 sub-subfamily. Homopentamer (in vitro). Heteropentamer composed of GLRA3 and GLRB. Both homopentamers and heteropentamers form functional ion channels, but their characteristics are subtly different. In terms of processing, phosphorylated by PKA; this causes down-regulation of channel activity. Dephosphorylated in response to activation of HTR1A signaling; this increases channel activity. Detected in brainstem, also in neurons that control rhythmic breathing. Detected in superficial laminae of the dorsal horn of the thoracic spinal cord. Detected in dentate gyrus in hippocampus, especially in stratum granulare. Detected in the inner plexiform layer in the retina (at protein level). Detected in midbrain, thalamus, brain cortex, hippocampus, and at lower levels in cerebellum.

It is found in the postsynaptic cell membrane. It localises to the synapse. Its subcellular location is the perikaryon. The protein resides in the cell projection. The protein localises to the dendrite. It is found in the cell membrane. The catalysed reaction is chloride(in) = chloride(out). With respect to regulation, inhibited by prostaglandin E2, probably via PKA-mediated phosphorylation at Ser-379. Its function is as follows. Glycine receptors are ligand-gated chloride channels. Channel opening is triggered by extracellular glycine. Channel characteristics depend on the subunit composition; heteropentameric channels display faster channel closure. Plays an important role in the down-regulation of neuronal excitability. Contributes to the generation of inhibitory postsynaptic currents. Contributes to increased pain perception in response to increased prostaglandin E2 levels. Plays a role in the regulation of breathing rhythm, especially of the duration of the postinspiratory phase. Plays a role in cellular responses to ethanol. The protein is Glycine receptor subunit alpha-3 (Glra3) of Mus musculus (Mouse).